A 121-amino-acid polypeptide reads, in one-letter code: Flagellar protein FliT (121 aa).

Residues 1–50 (MNHAPHLYFAWQQLVEKSQLMLRLATEEQWDELIASEMAYVNAVQEIAHL) form a required for homodimerization region. Residues 60–98 (MQEQLRPMLRLILDNESKVKQLLQIRMDELAKLVGQSSV) form a fliD binding region.

The protein belongs to the FliT family. As to quaternary structure, homodimer. Interacts with FliD and FlhC.

It is found in the cytoplasm. The protein resides in the cytosol. In terms of biological role, dual-function protein that regulates the transcription of class 2 flagellar operons and that also acts as an export chaperone for the filament-capping protein FliD. As a transcriptional regulator, acts as an anti-FlhDC factor; it directly binds FlhC, thus inhibiting the binding of the FlhC/FlhD complex to class 2 promoters, resulting in decreased expression of class 2 flagellar operons. As a chaperone, effects FliD transition to the membrane by preventing its premature polymerization, and by directing it to the export apparatus. The protein is Flagellar protein FliT of Escherichia coli O8 (strain IAI1).